The primary structure comprises 378 residues: Mannitol-1-phosphate 5-dehydrogenase (378 aa).

4-15 (SVHFGAGNIGRG) serves as a coordination point for NAD(+).

Belongs to the mannitol dehydrogenase family.

The enzyme catalyses D-mannitol 1-phosphate + NAD(+) = beta-D-fructose 6-phosphate + NADH + H(+). In Streptococcus pneumoniae (strain Hungary19A-6), this protein is Mannitol-1-phosphate 5-dehydrogenase.